The primary structure comprises 242 residues: MFKIFNDVPVPYGLYFQDSATPTFDGIIELHDIVMFYIVVTIVLVSYLLFVIIKNFSNDHISYKYLTHGTTLEIVWTIFPVVILLFIAFPSFILLYLCDEVIDPAMTIKAIASQWYWTYEYSDFIGETGEIVQFDSYIVPTDMLENGQLRMLDVDARIVVPTNTHLRFIVTSRDVIHDFALPSLGIKCDATPGRLNQVSALLQRESVYYGQCSELCGVLHSSMPIALEAVSIDKFLSWLDEQ.

At 7–33 (DVPVPYGLYFQDSATPTFDGIIELHDI) the chain is on the mitochondrial intermembrane side. A helical membrane pass occupies residues 34–55 (VMFYIVVTIVLVSYLLFVIIKN). Topologically, residues 56–73 (FSNDHISYKYLTHGTTLE) are mitochondrial matrix. Residues 74-98 (IVWTIFPVVILLFIAFPSFILLYLC) form a helical membrane-spanning segment. Over 99–242 (DEVIDPAMTI…DKFLSWLDEQ (144 aa)) the chain is Mitochondrial intermembrane. Positions 177, 212, 214, 216, 220, and 223 each coordinate Cu cation. Mg(2+) is bound at residue Glu-214.

This sequence belongs to the cytochrome c oxidase subunit 2 family. As to quaternary structure, component of the cytochrome c oxidase (complex IV, CIV), a multisubunit enzyme composed of a catalytic core of 3 subunits and several supernumerary subunits. The complex exists as a monomer or a dimer and forms supercomplexes (SCs) in the inner mitochondrial membrane with ubiquinol-cytochrome c oxidoreductase (cytochrome b-c1 complex, complex III, CIII). It depends on Cu cation as a cofactor. In terms of processing, the signal sequence of COX2 is processed by IMP1.

It is found in the mitochondrion inner membrane. The catalysed reaction is 4 Fe(II)-[cytochrome c] + O2 + 8 H(+)(in) = 4 Fe(III)-[cytochrome c] + 2 H2O + 4 H(+)(out). In terms of biological role, component of the cytochrome c oxidase, the last enzyme in the mitochondrial electron transport chain which drives oxidative phosphorylation. The respiratory chain contains 3 multisubunit complexes succinate dehydrogenase (complex II, CII), ubiquinol-cytochrome c oxidoreductase (cytochrome b-c1 complex, complex III, CIII) and cytochrome c oxidase (complex IV, CIV), that cooperate to transfer electrons derived from NADH and succinate to molecular oxygen, creating an electrochemical gradient over the inner membrane that drives transmembrane transport and the ATP synthase. Cytochrome c oxidase is the component of the respiratory chain that catalyzes the reduction of oxygen to water. Electrons originating from reduced cytochrome c in the intermembrane space (IMS) are transferred via the dinuclear copper A center (CU(A)) of subunit 2 and heme A of subunit 1 to the active site in subunit 1, a binuclear center (BNC) formed by heme A3 and copper B (CU(B)). The BNC reduces molecular oxygen to 2 water molecules using 4 electrons from cytochrome c in the IMS and 4 protons from the mitochondrial matrix. The sequence is that of Cytochrome c oxidase subunit 2 (COX2) from Yarrowia lipolytica (strain CLIB 122 / E 150) (Yeast).